The following is a 938-amino-acid chain: Probable glutamyl endopeptidase, chloroplastic (938 aa).

A chloroplast-targeting transit peptide spans 1–54; the sequence is MSSLTILLQRACLRFALLPVPPLRAPLRPPRRPLGLPRRSAMSSSAASRLSHIV. Residues 58–76 are compositionally biased toward low complexity; that stretch reads GGAAGESSEPPAAAAAASG. The tract at residues 58 to 77 is disordered; the sequence is GGAAGESSEPPAAAAAASGL. Residues serine 762, aspartate 836, and histidine 870 each act as charge relay system in the active site. Over residues 897 to 913 the composition is skewed to polar residues; sequence SSKTDSDSVADTENKTV. The tract at residues 897 to 938 is disordered; sequence SSKTDSDSVADTENKTVSASGGGAPCEGPEAEGFSSMQRSLL.

This sequence belongs to the peptidase S9D family.

The protein localises to the plastid. It localises to the chloroplast stroma. Functionally, serine-type protease active in vitro against the LHCII N-terminal. Cleaves its substrate on the carboxy-side of Glu residues. This chain is Probable glutamyl endopeptidase, chloroplastic (GEP), found in Oryza sativa subsp. japonica (Rice).